The chain runs to 388 residues: S-adenosylmethionine synthase (388 aa).

His-16 is an ATP binding site. Asp-18 is a binding site for Mg(2+). Residue Glu-44 participates in K(+) binding. 2 residues coordinate L-methionine: Glu-57 and Gln-100. Residues 100–110 (QSPEIAQGVDR) are flexible loop. ATP contacts are provided by residues 165–167 (DAK), 231–232 (KF), Asp-240, 246–247 (RK), Ala-263, and Lys-267. Residue Asp-240 participates in L-methionine binding. Lys-271 serves as a coordination point for L-methionine.

This sequence belongs to the AdoMet synthase family. In terms of assembly, homotetramer; dimer of dimers. The cofactor is Mg(2+). Requires K(+) as cofactor.

It is found in the cytoplasm. It catalyses the reaction L-methionine + ATP + H2O = S-adenosyl-L-methionine + phosphate + diphosphate. Its pathway is amino-acid biosynthesis; S-adenosyl-L-methionine biosynthesis; S-adenosyl-L-methionine from L-methionine: step 1/1. Catalyzes the formation of S-adenosylmethionine (AdoMet) from methionine and ATP. The overall synthetic reaction is composed of two sequential steps, AdoMet formation and the subsequent tripolyphosphate hydrolysis which occurs prior to release of AdoMet from the enzyme. This Psychrobacter arcticus (strain DSM 17307 / VKM B-2377 / 273-4) protein is S-adenosylmethionine synthase.